Reading from the N-terminus, the 406-residue chain is Formate-dependent phosphoribosylglycinamide formyltransferase (406 aa).

N(1)-(5-phospho-beta-D-ribosyl)glycinamide contacts are provided by residues 27 to 28 (EL) and Glu-87. Residues Arg-120, Lys-162, 167 to 172 (SSGKGQ), 202 to 205 (EGFI), and Glu-210 each bind ATP. The ATP-grasp domain maps to 125 to 320 (RLAAETLGLP…EFELHARALL (196 aa)). Mg(2+) is bound by residues Glu-279 and Glu-291. Residues Asp-298, Lys-367, and 374–375 (RR) contribute to the N(1)-(5-phospho-beta-D-ribosyl)glycinamide site.

Belongs to the PurK/PurT family. Homodimer.

It catalyses the reaction N(1)-(5-phospho-beta-D-ribosyl)glycinamide + formate + ATP = N(2)-formyl-N(1)-(5-phospho-beta-D-ribosyl)glycinamide + ADP + phosphate + H(+). It functions in the pathway purine metabolism; IMP biosynthesis via de novo pathway; N(2)-formyl-N(1)-(5-phospho-D-ribosyl)glycinamide from N(1)-(5-phospho-D-ribosyl)glycinamide (formate route): step 1/1. Involved in the de novo purine biosynthesis. Catalyzes the transfer of formate to 5-phospho-ribosyl-glycinamide (GAR), producing 5-phospho-ribosyl-N-formylglycinamide (FGAR). Formate is provided by PurU via hydrolysis of 10-formyl-tetrahydrofolate. This chain is Formate-dependent phosphoribosylglycinamide formyltransferase, found in Bordetella parapertussis (strain 12822 / ATCC BAA-587 / NCTC 13253).